The chain runs to 89 residues: Small ribosomal subunit protein uS14 (89 aa).

Belongs to the universal ribosomal protein uS14 family. As to quaternary structure, part of the 30S ribosomal subunit. Contacts proteins S3 and S10.

Its function is as follows. Binds 16S rRNA, required for the assembly of 30S particles and may also be responsible for determining the conformation of the 16S rRNA at the A site. This Chloroherpeton thalassium (strain ATCC 35110 / GB-78) protein is Small ribosomal subunit protein uS14.